A 107-amino-acid polypeptide reads, in one-letter code: Small integral membrane protein 19 (107 aa).

Residues Ala25–Ala43 form a helical membrane-spanning segment. The segment at Arg88–Glu107 is disordered. Over residues Gln93–Glu107 the composition is skewed to polar residues.

Belongs to the SMIM19 family.

It localises to the membrane. This Mus musculus (Mouse) protein is Small integral membrane protein 19 (Smim19).